The following is a 280-amino-acid chain: Chlorophyll a-b binding protein CP26, chloroplastic (280 aa).

The transit peptide at 1–48 directs the protein to the chloroplast; sequence MASLGVSEMLGTPLNFRAVSRSSAPLASSPSTFKTVALFSKKKPAPAK. F70 contributes to the chlorophyll b binding site. Positions 95, 114, and 117 each coordinate chlorophyll a. 2 helical membrane-spanning segments follow: residues 110–130 and 167–187; these read YQAFELIHARWAMLGAAGFII and IPINLVLAVVAEVVLLGGAEY. Chlorophyll b contacts are provided by R119, I167, E186, and R189. 6 residues coordinate chlorophyll a: K224, E225, N228, R230, Q242, and H257. The helical transmembrane segment at 231–251 threads the bilayer; that stretch reads LAMFAMLGFFIQAYVTGEGPV.

This sequence belongs to the light-harvesting chlorophyll a/b-binding (LHC) protein family. Forms heterotrimers with LHCB3. The LHC complex consists of chlorophyll a-b binding proteins. Binds at least 14 chlorophylls (8 Chl-a and 6 Chl-b) and carotenoids such as lutein and neoxanthin. serves as cofactor. In terms of processing, photoregulated by reversible phosphorylation of its threonine residues.

It localises to the plastid. It is found in the chloroplast thylakoid membrane. Functionally, the light-harvesting complex (LHC) functions as a light receptor, it captures and delivers excitation energy to photosystems with which it is closely associated. This is Chlorophyll a-b binding protein CP26, chloroplastic (LHCB5) from Arabidopsis thaliana (Mouse-ear cress).